A 385-amino-acid polypeptide reads, in one-letter code: Methionine aminopeptidase 1 (385 aa).

A C6H2-type zinc finger spans residues 6–59 (TRVCETAGCSSEAKLQCPTCLKLGIQGSYFCSQECFKGSWATHKLLHKKAKDEK). Residues cysteine 9, cysteine 14, cysteine 22, cysteine 25, cysteine 36, cysteine 40, histidine 48, and histidine 52 each contribute to the Zn(2+) site. Histidine 203 contacts a protein. Residues aspartate 220, aspartate 231, and histidine 294 each coordinate Zn(2+). Residue histidine 301 coordinates a protein. The Zn(2+) site is built by glutamate 327 and glutamate 358.

It belongs to the peptidase M24A family. Methionine aminopeptidase type 1 subfamily. As to quaternary structure, associates with the 60S ribosomal subunit of the 80S translational complex. The cofactor is Zn(2+). It depends on Co(2+) as a cofactor. Mn(2+) serves as cofactor. Requires Fe(2+) as cofactor.

It is found in the cytoplasm. It carries out the reaction Release of N-terminal amino acids, preferentially methionine, from peptides and arylamides.. In terms of biological role, cotranslationally removes the N-terminal methionine from nascent proteins. The N-terminal methionine is often cleaved when the second residue in the primary sequence is small and uncharged (Met-Ala-, Cys, Gly, Pro, Ser, Thr, or Val). This chain is Methionine aminopeptidase 1 (METAP1), found in Gallus gallus (Chicken).